The primary structure comprises 194 residues: N-acetyltransferase (194 aa).

One can recognise an N-acetyltransferase domain in the interval 9–173 (PQVRPGIAED…GRYWDVRWYE (165 aa)).

This sequence belongs to the acetyltransferase family. PAT/BAR subfamily.

This chain is N-acetyltransferase (nat), found in Streptomyces griseus.